The primary structure comprises 557 residues: Fatty acyl-CoA hydrolase precursor, medium chain (557 aa).

The first 25 residues, 1-25, serve as a signal peptide directing secretion; it reads MATEKNTLLSLILTAGITALVATGQ. Cysteine 93 and cysteine 122 form a disulfide bridge. Serine 227 functions as the Acyl-ester intermediate in the catalytic mechanism. Residues glutamate 345 and histidine 460 each act as charge relay system in the active site. Asparagine 476 carries an N-linked (GlcNAc...) asparagine glycan.

Belongs to the type-B carboxylesterase/lipase family. Highest levels in uropygial gland, much lower in liver and kidney.

Functionally, fatty acid biosynthesis chain termination and release of the free fatty acid product is achieved by hydrolysis of the thio ester by a thioesterase. This thioesterase may be associated with peroxisome proliferation and may play a role in the production of 3-hydroxy fatty acid diester pheromones. This is Fatty acyl-CoA hydrolase precursor, medium chain from Anas platyrhynchos (Mallard).